Consider the following 1224-residue polypeptide: Serine/threonine-protein kinase CST20 (1224 aa).

Over residues 1–18 (MSILSENNPTPTSITDPN) the composition is skewed to polar residues. Disordered stretches follow at residues 1 to 378 (MSIL…TAHN) and 403 to 464 (TNSS…HSQE). Composition is skewed to low complexity over residues 57-70 (NTTSANTSSLSLGS) and 95-119 (DSGSGDIDDSQQSHNNNNNESNPES). A compositionally biased stretch (basic and acidic residues) spans 144-155 (HQGDDSDNEKQY). Polar residues-rich tracts occupy residues 169 to 191 (DSYSLGTLESPGTLNALETNNVS), 201 to 218 (TSSLEDLSLSLQHQNENA), and 231 to 240 (PTSKTSSFHD). Low complexity predominate over residues 242-251 (SSVISSSTSV). Polar residues-rich tracts occupy residues 256–271 (SNPTSTRGSHLSSYKS) and 305–324 (DTLSSATNSPNLLRNDTLQG). 2 stretches are compositionally biased toward low complexity: residues 343-375 (NTSATSRNTSGTSTSTVVKNSRSGTSKSTSTST) and 433-462 (KVRGVFSSMFGKNKSTSSSSSSNSGSNSHS). The CRIB domain maps to 469–482 (ISTPFNAKHLAHVG). Disordered stretches follow at residues 539 to 825 (FHFD…ALAD) and 861 to 913 (LREK…KQAA). Residues 544–555 (NKSSSSGWSNEN) are compositionally biased toward polar residues. Positions 564-575 (SNSGSGSGGGGA) are enriched in gly residues. The span at 598–607 (ITPSQSMPTK) shows a compositional bias: polar residues. Basic and acidic residues predominate over residues 608-622 (TESKQSENQHPHEDN). Over residues 623–636 (ATQYTPRTPTSHVQ) the composition is skewed to polar residues. Composition is skewed to low complexity over residues 664 to 677 (PSSQSLPRSDSQSD), 690 to 704 (SPSKIKIRSISSKSL), and 730 to 743 (SIPKSKSHSASLSS). The segment covering 744–755 (QLRPATNGSTTA) has biased composition (polar residues). Pro residues predominate over residues 783–801 (APPPPPSAPPAPPVPPAPP). The span at 805-820 (LSEQTSEIPQQRTAPS) shows a compositional bias: polar residues. Residues 861–870 (LREKNERQNR) are compositionally biased toward basic and acidic residues. Residues 871–886 (QQETGQNNADTASGGS) show a composition bias toward polar residues. Residues 947–1199 (YVDLVKIGQG…ADELLHDNFI (253 aa)) form the Protein kinase domain. ATP contacts are provided by residues 953-961 (IGQGASGGV) and lysine 977. Catalysis depends on aspartate 1067, which acts as the Proton acceptor.

Belongs to the protein kinase superfamily. STE Ser/Thr protein kinase family. STE20 subfamily.

Its subcellular location is the cytoplasm. It localises to the nucleus. The enzyme catalyses L-seryl-[protein] + ATP = O-phospho-L-seryl-[protein] + ADP + H(+). It carries out the reaction L-threonyl-[protein] + ATP = O-phospho-L-threonyl-[protein] + ADP + H(+). Functionally, MAP4K component of the MAPK pathway required for the mating pheromone response, and the regulation of cell polarity and cell cycle. Phosphorylates histone H2B to form H2BS10ph. Required for hyphal formation and virulence. This is Serine/threonine-protein kinase CST20 (CST20) from Candida albicans (strain WO-1) (Yeast).